The sequence spans 615 residues: Proteasome-associated ATPase (615 aa).

The segment at 1–27 is disordered; the sequence is MSESERSEASEVFGTSPDSRLSSEDAA. A coiled-coil region spans residues 22 to 99; it reads SSEDAAELEQ…LREEVDRLGQ (78 aa). 302 to 307 is a binding site for ATP; the sequence is GCGKTL. A docks into pockets in the proteasome alpha-ring region spans residues 614 to 615; it reads YL.

The protein belongs to the AAA ATPase family. As to quaternary structure, homohexamer. Assembles into a hexameric ring structure that caps the 20S proteasome core. Strongly interacts with the prokaryotic ubiquitin-like protein Pup through a hydrophobic interface; the interacting region of ARC lies in its N-terminal coiled-coil domain. There is one Pup binding site per ARC hexamer ring. Upon ATP-binding, the C-terminus of ARC interacts with the alpha-rings of the proteasome core, possibly by binding to the intersubunit pockets.

The protein operates within protein degradation; proteasomal Pup-dependent pathway. In terms of biological role, ATPase which is responsible for recognizing, binding, unfolding and translocation of pupylated proteins into the bacterial 20S proteasome core particle. May be essential for opening the gate of the 20S proteasome via an interaction with its C-terminus, thereby allowing substrate entry and access to the site of proteolysis. Thus, the C-termini of the proteasomal ATPase may function like a 'key in a lock' to induce gate opening and therefore regulate proteolysis. The polypeptide is Proteasome-associated ATPase (Mycolicibacterium vanbaalenii (strain DSM 7251 / JCM 13017 / BCRC 16820 / KCTC 9966 / NRRL B-24157 / PYR-1) (Mycobacterium vanbaalenii)).